A 418-amino-acid chain; its full sequence is UDP-N-acetylglucosamine 1-carboxyvinyltransferase (418 aa).

Residue 23-24 coordinates phosphoenolpyruvate; that stretch reads KN. Position 93 (arginine 93) interacts with UDP-N-acetyl-alpha-D-glucosamine. Aspartate 117 acts as the Proton donor in catalysis. Positions 305 and 327 each coordinate UDP-N-acetyl-alpha-D-glucosamine.

Belongs to the EPSP synthase family. MurA subfamily.

It localises to the cytoplasm. The enzyme catalyses phosphoenolpyruvate + UDP-N-acetyl-alpha-D-glucosamine = UDP-N-acetyl-3-O-(1-carboxyvinyl)-alpha-D-glucosamine + phosphate. It functions in the pathway cell wall biogenesis; peptidoglycan biosynthesis. Functionally, cell wall formation. Adds enolpyruvyl to UDP-N-acetylglucosamine. The polypeptide is UDP-N-acetylglucosamine 1-carboxyvinyltransferase (Mycobacterium leprae (strain TN)).